The primary structure comprises 476 residues: Proline--tRNA ligase (476 aa).

The protein belongs to the class-II aminoacyl-tRNA synthetase family. ProS type 3 subfamily. As to quaternary structure, homodimer.

The protein resides in the cytoplasm. The enzyme catalyses tRNA(Pro) + L-proline + ATP = L-prolyl-tRNA(Pro) + AMP + diphosphate. Its function is as follows. Catalyzes the attachment of proline to tRNA(Pro) in a two-step reaction: proline is first activated by ATP to form Pro-AMP and then transferred to the acceptor end of tRNA(Pro). This Rubrobacter xylanophilus (strain DSM 9941 / JCM 11954 / NBRC 16129 / PRD-1) protein is Proline--tRNA ligase.